Reading from the N-terminus, the 92-residue chain is Phenol 2-monooxygenase, auxiliary component DmpK (92 aa).

Homotrimer or homotetramer. Interacts with the phenol hydroxylase components DmpL (P1 component) and DmpN (P3 component).

Its pathway is aromatic compound metabolism; phenol degradation. Functionally, dmpK is an auxiliary protein associated with the multicomponent phenol hydroxylase DmpLMNOP and it may be involved in the post-translational incorporation of iron into the oxygenase component of the phenol hydroxylase. Required for growth on phenol but not for in vitro phenol hydroxylase activity. This Pseudomonas sp. (strain CF600) protein is Phenol 2-monooxygenase, auxiliary component DmpK.